The primary structure comprises 884 residues: DNA replication licensing factor mcm2 (884 aa).

The segment covering 1-16 (MADSSESFNIATSPRT) has biased composition (polar residues). Disordered stretches follow at residues 1-61 (MADS…IGDA) and 120-151 (LYDSDEEDEDRPARKRRMAERAAEGAPEEDEE). Acidic residues predominate over residues 47 to 58 (PREEEEDGEELI). The segment at 314–340 (CNKCNFILGPFFQSQNQEVKPGSCPEC) adopts a C4-type zinc-finger fold. The MCM domain maps to 458-664 (IGERIFASIA…VQDEMLARFV (207 aa)). ADP-binding residues include Ser-515 and Gln-516. The short motif at 640-643 (SRFD) is the Arginine finger element.

This sequence belongs to the MCM family. As to quaternary structure, component of the mcm2-7 complex (RLF-M). The complex forms a toroidal hexameric ring with the proposed subunit order mcm2-mcm6-mcm4-mcm7-mcm3-mcm5. Component of the replisome complex. Component of the CMG helicase complex, composed of the mcm2-7 complex, the GINS complex and cdc45. In terms of processing, may be in a phosphorylated state in the mitotic mcm complex. Phosphorylated in the interphase mcm complex. Phosphorylated by the cdc7-dbf4 and cdc7-dbf4b complexes.

The protein resides in the nucleus. It localises to the chromosome. It catalyses the reaction ATP + H2O = ADP + phosphate + H(+). Its function is as follows. Acts as a component of the MCM2-7 complex (MCM complex) which is the replicative helicase essential for 'once per cell cycle' DNA replication initiation and elongation in eukaryotic cells. Core component of CDC45-MCM-GINS (CMG) helicase, the molecular machine that unwinds template DNA during replication, and around which the replisome is built. The active ATPase sites in the MCM2-7 ring are formed through the interaction surfaces of two neighboring subunits such that a critical structure of a conserved arginine finger motif is provided in trans relative to the ATP-binding site of the Walker A box of the adjacent subunit. The six ATPase active sites, however, are likely to contribute differentially to the complex helicase activity. Required for the entry in S phase and for cell division. In Xenopus tropicalis (Western clawed frog), this protein is DNA replication licensing factor mcm2.